Here is a 397-residue protein sequence, read N- to C-terminus: 1-deoxy-D-xylulose 5-phosphate reductoisomerase (397 aa).

NADPH contacts are provided by S10, G11, S12, I13, A36, R37, and N124. A 1-deoxy-D-xylulose 5-phosphate-binding site is contributed by K125. E126 serves as a coordination point for NADPH. D150 contacts Mn(2+). Residues S151, E152, S186, and H209 each contribute to the 1-deoxy-D-xylulose 5-phosphate site. Residue E152 coordinates Mn(2+). NADPH is bound at residue G215. Residues S222, N227, K228, and E231 each coordinate 1-deoxy-D-xylulose 5-phosphate. Position 231 (E231) interacts with Mn(2+).

Belongs to the DXR family. Mg(2+) serves as cofactor. The cofactor is Mn(2+).

The catalysed reaction is 2-C-methyl-D-erythritol 4-phosphate + NADP(+) = 1-deoxy-D-xylulose 5-phosphate + NADPH + H(+). It participates in isoprenoid biosynthesis; isopentenyl diphosphate biosynthesis via DXP pathway; isopentenyl diphosphate from 1-deoxy-D-xylulose 5-phosphate: step 1/6. In terms of biological role, catalyzes the NADPH-dependent rearrangement and reduction of 1-deoxy-D-xylulose-5-phosphate (DXP) to 2-C-methyl-D-erythritol 4-phosphate (MEP). The protein is 1-deoxy-D-xylulose 5-phosphate reductoisomerase of Aeromonas hydrophila subsp. hydrophila (strain ATCC 7966 / DSM 30187 / BCRC 13018 / CCUG 14551 / JCM 1027 / KCTC 2358 / NCIMB 9240 / NCTC 8049).